We begin with the raw amino-acid sequence, 658 residues long: Exoribonuclease 2 (658 aa).

The RNB domain occupies 189–531; it reads REDLTALHFI…NHRLIKAVLT (343 aa). One can recognise an S1 motif domain in the interval 576 to 658; sequence KPTFQAEIQD…ETRSIVGTLC (83 aa).

It belongs to the RNR ribonuclease family. RNase II subfamily.

It localises to the cytoplasm. The catalysed reaction is Exonucleolytic cleavage in the 3'- to 5'-direction to yield nucleoside 5'-phosphates.. Functionally, involved in mRNA degradation. Hydrolyzes single-stranded polyribonucleotides processively in the 3' to 5' direction. The protein is Exoribonuclease 2 of Pasteurella multocida (strain Pm70).